A 170-amino-acid chain; its full sequence is Cathelicidin antimicrobial peptide (170 aa).

The first 30 residues, 1 to 30, serve as a signal peptide directing secretion; that stretch reads MNTQWDSPSLGRWSLVLLLLGLVMPLAIVA. A propeptide spans 31–131 (cathelin-like domain (CLD)); that stretch reads QVLSYQEAVL…DISCDKDKRK (101 aa). 2 disulfide bridges follow: cysteine 86–cysteine 97 and cysteine 108–cysteine 125. Positions 150–162 are active core; sequence LKNIGQRIKDFFG.

It belongs to the cathelicidin family. As to quaternary structure, monomer, homodimer or homotrimer (in vitro). Oligomerizes as tetra- or hexamer in solution (in vitro). Proteolytically cleaved by proteinase PRTN3 into antibacterial peptide LL-37. Proteolytically cleaved by cathepsin CTSG and neutrophil elastase ELANE. In terms of processing, resistant to proteolytic degradation in solution, and when bound to both zwitterionic (mimicking mammalian membranes) and negatively charged membranes (mimicking bacterial membranes). Post-translationally, after secretion onto the skin surface, the CAMP gene product is processed by a serine protease-dependent mechanism into multiple novel antimicrobial peptides distinct from and shorter than cathelicidin LL-37. These peptides show enhanced antimicrobial action, acquiring the ability to kill skin pathogens such as S.aureus, E.coli and C.albicans. These peptides have lost the ability to stimulate CXCL8/IL8 release from keratinocytes. The peptides act synergistically, killing bacteria at lower concentrations when present together, and maintain activity at increased salt condition.

It is found in the secreted. It localises to the vesicle. Its function is as follows. Antimicrobial protein that is an integral component of the innate immune system. Binds to bacterial lipopolysaccharides (LPS). Acts via neutrophil N-formyl peptide receptors to enhance the release of CXCL2. Postsecretory processing generates multiple cathelicidin antimicrobial peptides with various lengths which act as a topical antimicrobial defense in sweat on skin. The unprocessed precursor form, cathelicidin antimicrobial peptide, inhibits the growth of Gram-negative E.coli and E.aerogenes with efficiencies comparable to that of the mature peptide LL-37 (in vitro). Functionally, antimicrobial peptide that is an integral component of the innate immune system. Binds to bacterial lipopolysaccharides (LPS). Causes membrane permeabilization by forming transmembrane pores (in vitro). Causes lysis of E.coli. Exhibits antimicrobial activity against Gram-negative bacteria such as P.aeruginosa, S.typhimurium, E.aerogenes, E.coli and P.syringae, Gram-positive bacteria such as L.monocytogenes, S.epidermidis, S.pyogenes and S.aureus, as well as vancomycin-resistant enterococci (in vitro). Exhibits antimicrobial activity against methicillin-resistant S.aureus, P.mirabilis, and C.albicans in low-salt media, but not in media containing 100 mM NaCl (in vitro). Forms chiral supramolecular assemblies with quinolone signal (PQS) molecules of P.aeruginosa, which may lead to interference of bacterial quorum signaling and perturbance of bacterial biofilm formation. May form supramolecular fiber-like assemblies on bacterial membranes. Induces cytokine and chemokine producation as well as TNF/TNFA and CSF2/GMCSF production in normal human keratinocytes. Exhibits hemolytic activity against red blood cells. Exhibits antimicrobial activity against E.coli and B.megaterium (in vitro). This chain is Cathelicidin antimicrobial peptide, found in Ateles fusciceps (Brown-headed spider monkey).